The chain runs to 397 residues: uncharacterized protein (397 aa).

The next 4 membrane-spanning stretches (helical) occupy residues 62–79 (VLLF…LIAI), 92–109 (WYGL…LVVT), 135–154 (VVFL…STLS), and 167–189 (AFLK…FPGI).

The protein resides in the cell membrane. This is an uncharacterized protein from Archaeoglobus fulgidus (strain ATCC 49558 / DSM 4304 / JCM 9628 / NBRC 100126 / VC-16).